We begin with the raw amino-acid sequence, 325 residues long: Lipid droplet-associated hydrolase (325 aa).

Ser-139 (nucleophile) is an active-site residue. Residues Asp-271 and His-300 each act as charge relay system in the active site.

It belongs to the AB hydrolase superfamily. LDAH family.

It is found in the lipid droplet. The protein localises to the endoplasmic reticulum. It carries out the reaction a cholesterol ester + H2O = cholesterol + a fatty acid + H(+). Its function is as follows. Probable serine lipid hydrolase associated with lipid droplets. Has low cholesterol esterase activity. Appears to lack triglyceride lipase activity. Involved in cholesterol and triglyceride homeostasis; stimulates cellular triglyceride accumulation and cellular cholesterol release. Acts antagonistically with PNPLA2/ATGL in regulation of cellular lipid stores. May regulate triglyceride accumulation indirectly through stimulation of PNPLA2/ATGL ubiquitination and proteasomal degradation. Promotes microtubule-dependent lipid droplet fusion. Highly expressed in macrophage-rich areas in atherosclerotic lesions, suggesting that it could promote cholesterol ester turnover in macrophages. In Pongo abelii (Sumatran orangutan), this protein is Lipid droplet-associated hydrolase.